A 740-amino-acid chain; its full sequence is Cell death abnormality protein 12 (740 aa).

In terms of domain architecture, ELMO spans 348–494 (SEIQKVLDID…FVLEQLRHVL (147 aa)). The interval 555-690 (INHLNYLKKG…ESLAYLVGNT (136 aa)) is required for punctate localization, cell corpse engulfment and distal cell tip migration. The SH3-binding motif lies at 724 to 727 (PDVP).

As to quaternary structure, interacts with psr-1. Forms a ternary complex with ced-2 and ced-5.

It localises to the cytoplasm. Functionally, involved in apoptosis and necrosis. Required for the cell corpse engulfment process. Has roles in the formation of actin halos and distal tip cell migration. Plays no role in amphid axon outgrowth. The chain is Cell death abnormality protein 12 from Caenorhabditis briggsae.